The primary structure comprises 439 residues: Xaa-Pro dipeptidase (439 aa).

Mn(2+)-binding residues include aspartate 244, aspartate 255, histidine 335, glutamate 380, and glutamate 419.

It belongs to the peptidase M24B family. Bacterial-type prolidase subfamily. Requires Mn(2+) as cofactor.

The enzyme catalyses Xaa-L-Pro dipeptide + H2O = an L-alpha-amino acid + L-proline. Functionally, splits dipeptides with a prolyl residue in the C-terminal position. This Shewanella sediminis (strain HAW-EB3) protein is Xaa-Pro dipeptidase.